Consider the following 423-residue polypeptide: CinA-like protein (423 aa).

The protein belongs to the CinA family.

The chain is CinA-like protein from Chlorobium chlorochromatii (strain CaD3).